The sequence spans 334 residues: Holliday junction branch migration complex subunit RuvB (334 aa).

Residues Met1–Tyr179 are large ATPase domain (RuvB-L). ATP is bound by residues Leu18, Arg19, Gly60, Lys63, Thr64, Ser65, Glu126–Phe128, Arg169, Tyr179, and Arg216. Position 64 (Thr64) interacts with Mg(2+). The tract at residues Thr180–Leu250 is small ATPAse domain (RuvB-S). A head domain (RuvB-H) region spans residues Asn253–Glu334. DNA contacts are provided by Arg308 and Arg313.

Belongs to the RuvB family. As to quaternary structure, homohexamer. Forms an RuvA(8)-RuvB(12)-Holliday junction (HJ) complex. HJ DNA is sandwiched between 2 RuvA tetramers; dsDNA enters through RuvA and exits via RuvB. An RuvB hexamer assembles on each DNA strand where it exits the tetramer. Each RuvB hexamer is contacted by two RuvA subunits (via domain III) on 2 adjacent RuvB subunits; this complex drives branch migration. In the full resolvosome a probable DNA-RuvA(4)-RuvB(12)-RuvC(2) complex forms which resolves the HJ.

The protein resides in the cytoplasm. It catalyses the reaction ATP + H2O = ADP + phosphate + H(+). The RuvA-RuvB-RuvC complex processes Holliday junction (HJ) DNA during genetic recombination and DNA repair, while the RuvA-RuvB complex plays an important role in the rescue of blocked DNA replication forks via replication fork reversal (RFR). RuvA specifically binds to HJ cruciform DNA, conferring on it an open structure. The RuvB hexamer acts as an ATP-dependent pump, pulling dsDNA into and through the RuvAB complex. RuvB forms 2 homohexamers on either side of HJ DNA bound by 1 or 2 RuvA tetramers; 4 subunits per hexamer contact DNA at a time. Coordinated motions by a converter formed by DNA-disengaged RuvB subunits stimulates ATP hydrolysis and nucleotide exchange. Immobilization of the converter enables RuvB to convert the ATP-contained energy into a lever motion, pulling 2 nucleotides of DNA out of the RuvA tetramer per ATP hydrolyzed, thus driving DNA branch migration. The RuvB motors rotate together with the DNA substrate, which together with the progressing nucleotide cycle form the mechanistic basis for DNA recombination by continuous HJ branch migration. Branch migration allows RuvC to scan DNA until it finds its consensus sequence, where it cleaves and resolves cruciform DNA. In Chlamydia trachomatis serovar A (strain ATCC VR-571B / DSM 19440 / HAR-13), this protein is Holliday junction branch migration complex subunit RuvB.